A 594-amino-acid chain; its full sequence is Sucrose transport protein SUC3 (594 aa).

At S2 the chain carries N-acetylserine. The Cytoplasmic portion of the chain corresponds to 2–58 (SDSVSISVPYRNLRKEIELETVTKHRQNESGSSSFSESASPSNHSDSADGESVSKNC). The interval 23–50 (VTKHRQNESGSSSFSESASPSNHSDSAD) is disordered. Residues 31 to 46 (SGSSSFSESASPSNHS) are compositionally biased toward low complexity. The helical transmembrane segment at 59–79 (SLVTLVLSCTVAAGVQFGWAL) threads the bilayer. Residues 80-98 (QLSLLTPYIQTLGISHAFS) lie on the Extracellular side of the membrane. The chain crosses the membrane as a helical span at residues 99–119 (SFIWLCGPITGLVVQPFVGIW). The Cytoplasmic portion of the chain corresponds to 120-131 (SDKCTSKYGRRR). Residues 132–152 (PFILVGSFMISIAVIIIGFSA) form a helical membrane-spanning segment. The Extracellular segment spans residues 153 to 174 (DIGYLLGDSKEHCSTFKGTRTR). The chain crosses the membrane as a helical span at residues 175–195 (AAVVFIIGFWLLDLANNTVQG). The Cytoplasmic portion of the chain corresponds to 196-214 (PARALLADLSGPDQRNTAN). Residues 215–235 (AVFCLWMAIGNILGFSAGASG) form a helical membrane-spanning segment. Over 236–257 (KWQEWFPFLTSRACCAACGNLK) the chain is Extracellular. The helical transmembrane segment at 258–278 (AAFLLAVVFLTICTLVTIYFA) threads the bilayer. Residues 279-365 (KEIPFTSNKP…LTSLRHLPPA (87 aa)) lie on the Cytoplasmic side of the membrane. Residues 366 to 386 (MHSVLIVMALTWLSWFPFFLF) traverse the membrane as a helical segment. Over 387–417 (DTDWMGREVYHGDPTGDSLHMELYDQGVREG) the chain is Extracellular. The helical transmembrane segment at 418-438 (ALGLLLNSVVLGISSFLIEPM) threads the bilayer. Residues 439 to 445 (CQRMGAR) are Cytoplasmic-facing. The chain crosses the membrane as a helical span at residues 446–466 (VVWALSNFTVFACMAGTAVIS). At 467 to 489 (LMSLSDDKNGIEYIMRGNETTRT) the chain is on the extracellular side. The N-linked (GlcNAc...) asparagine glycan is linked to N484. The chain crosses the membrane as a helical span at residues 490–510 (AAVIVFALLGFPLAITYSVPF). The Cytoplasmic segment spans residues 511-525 (SVTAEVTADSGGGQG). The helical transmembrane segment at 526–546 (LAIGVLNLAIVIPQMIVSLGA) threads the bilayer. The Extracellular portion of the chain corresponds to 547–555 (GPWDQLFGG). Residues 556–576 (GNLPAFVLASVAAFAAGVIAL) traverse the membrane as a helical segment. At 577 to 594 (QRLPTLSSSFKSTGFHIG) the chain is on the cytoplasmic side.

It belongs to the glycoside-pentoside-hexuronide (GPH) cation symporter transporter (TC 2.A.2.4) family. In terms of assembly, homodimer. Interacts with SUC2 and SUC4. In terms of tissue distribution, mostly localized in parenchymatic cells next to vascular tissues (at protein level). Present in stipules, trichomes, hydathodes and guard cells of source leaves, as well as in lateral root tips and flowers.

It localises to the cell membrane. It catalyses the reaction sucrose(out) + H(+)(out) = sucrose(in) + H(+)(in). It functions in the pathway glycan biosynthesis; sucrose metabolism. Inhibited by protonophores (e.g. dinitrophenol and carbonyl cyanide m-chlorophenyl-hydrazone (CCCP)) and SH group inhibitors (e.g. p-chloromercuribenzene sulphonic acid (PCMBS)). In terms of biological role, responsible for the transport of sucrose into the cell, with the concomitant uptake of protons (symport system). Can also transport maltose at a lesser rate. May also transport biotin. Probably involved in carpel maturation that leads to pod shatter and seed dispersal. The polypeptide is Sucrose transport protein SUC3 (Arabidopsis thaliana (Mouse-ear cress)).